Here is a 226-residue protein sequence, read N- to C-terminus: ATP synthase F(0) complex subunit a (226 aa).

Transmembrane regions (helical) follow at residues 6–26, 68–88, 97–117, 138–158, 164–184, and 189–209; these read FASFITPVILGLPLVTLIVLF, WALMLMSLILFIGSTNLLGLL, QLSMNLGMAIPLWAGAVITGF, IPMLVIIETISLFIQPVALAV, ITAGHLLIHLIGGATLALMSI, and ALITFTILILLTILEFAVAMI.

Belongs to the ATPase A chain family. Component of the ATP synthase complex composed at least of ATP5F1A/subunit alpha, ATP5F1B/subunit beta, ATP5MC1/subunit c (homooctomer), MT-ATP6/subunit a, MT-ATP8/subunit 8, ATP5ME/subunit e, ATP5MF/subunit f, ATP5MG/subunit g, ATP5MK/subunit k, ATP5MJ/subunit j, ATP5F1C/subunit gamma, ATP5F1D/subunit delta, ATP5F1E/subunit epsilon, ATP5PF/subunit F6, ATP5PB/subunit b, ATP5PD/subunit d, ATP5PO/subunit OSCP. ATP synthase complex consists of a soluble F(1) head domain (subunits alpha(3) and beta(3)) - the catalytic core - and a membrane F(0) domain - the membrane proton channel (subunits c, a, 8, e, f, g, k and j). These two domains are linked by a central stalk (subunits gamma, delta, and epsilon) rotating inside the F1 region and a stationary peripheral stalk (subunits F6, b, d, and OSCP). Interacts with DNAJC30; interaction is direct.

The protein localises to the mitochondrion inner membrane. The enzyme catalyses H(+)(in) = H(+)(out). Its function is as follows. Subunit a, of the mitochondrial membrane ATP synthase complex (F(1)F(0) ATP synthase or Complex V) that produces ATP from ADP in the presence of a proton gradient across the membrane which is generated by electron transport complexes of the respiratory chain. ATP synthase complex consist of a soluble F(1) head domain - the catalytic core - and a membrane F(1) domain - the membrane proton channel. These two domains are linked by a central stalk rotating inside the F(1) region and a stationary peripheral stalk. During catalysis, ATP synthesis in the catalytic domain of F(1) is coupled via a rotary mechanism of the central stalk subunits to proton translocation. With the subunit c (ATP5MC1), forms the proton-conducting channel in the F(0) domain, that contains two crucial half-channels (inlet and outlet) that facilitate proton movement from the mitochondrial intermembrane space (IMS) into the matrix. Protons are taken up via the inlet half-channel and released through the outlet half-channel, following a Grotthuss mechanism. In Bos indicus (Zebu), this protein is ATP synthase F(0) complex subunit a.